A 355-amino-acid polypeptide reads, in one-letter code: Ubiquinone biosynthesis protein COQ4 homolog, mitochondrial (355 aa).

Residues histidine 134, aspartate 135, histidine 138, and glutamate 150 each coordinate Zn(2+).

This sequence belongs to the COQ4 family. Component of a multi-subunit COQ enzyme complex. Zn(2+) is required as a cofactor.

Its subcellular location is the mitochondrion inner membrane. It catalyses the reaction a 4-hydroxy-3-methoxy-5-(all-trans-polyprenyl)benzoate + H(+) = a 2-methoxy-6-(all-trans-polyprenyl)phenol + CO2. It participates in cofactor biosynthesis; ubiquinone biosynthesis. Functionally, lyase that catalyzes the C1-decarboxylation of 4-hydroxy-3-methoxy-5-(all-trans-polyprenyl)benzoic acid into 2-methoxy-6-(all-trans-polyprenyl)phenol during ubiquinone biosynthesis. This is Ubiquinone biosynthesis protein COQ4 homolog, mitochondrial from Plasmodium yoelii yoelii.